The following is a 502-amino-acid chain: Cytochrome P450 monooxygenase pyr9 (502 aa).

Residues 5 to 25 form a helical membrane-spanning segment; sequence EDASIGTVWVTCLLAVGLYFI. Residues asparagine 205, asparagine 291, and asparagine 372 are each glycosylated (N-linked (GlcNAc...) asparagine). Cysteine 437 contributes to the heme binding site.

It belongs to the cytochrome P450 family. The cofactor is heme.

The protein resides in the membrane. It functions in the pathway secondary metabolite biosynthesis; terpenoid biosynthesis. Functionally, cytochrome P450 monooxygenase; part of the gene cluster that mediates the biosynthesis of pyripyropene A, a specific human acyl-coenzyme A:cholesterol acyltransferase 2 inhibitor. The first step of the pathway is the synthesis of nicotinyl-CoA from nicotinic acid by the nicotinic acid-CoA ligase pyr1. Nicotinyl-CoA is then a substrate of polyketide synthase pyr2 to produce 4-hydroxy-6-(3-pyridinyl)-2H-pyran-2-one (HPPO) which is further prenylated by the polyprenyl transferase pyr6 to yield farnesyl-HPPO. The next steps consist of an epoxidation of farnesyl-HPPO to epoxyfarnesyl-HPPO by FAD-dependent monooxygenase pyr5 and a cyclization of the terpenoid portion by the terpene cyclase pyr4 to yield deacetyl-pyripyropene E. The 2 cytochrome P450 monooxygenases pyr3 and pyr9, and the 2 acetyltransferases pyr7 and pyr8 are involved in the conversion of deacetyl-pyripyropene E into pyripyropene A through several cycles of oxidation and acetylation steps. Pyr7 acetylates deacetyl-pyripyropene E to pyripyropene E which is oxidized to 11-deacetyl-pyripyropene O by pyr3, which is in turn acetylated into pyripyropene O by pyr8. Pyripyropene O is then oxidized to deacetyl-pyripyropene A by pyr9. Deacetyl-pyripyropene A is finally acetylated to pyripyropene A by pyr8. The chain is Cytochrome P450 monooxygenase pyr9 from Aspergillus fumigatus (strain ATCC MYA-4609 / CBS 101355 / FGSC A1100 / Af293) (Neosartorya fumigata).